The chain runs to 1497 residues: DNA-directed RNA polymerase subunit beta (1497 aa).

The protein belongs to the RNA polymerase beta chain family. As to quaternary structure, the RNAP catalytic core consists of 2 alpha, 1 beta, 1 beta' and 1 omega subunit. When a sigma factor is associated with the core the holoenzyme is formed, which can initiate transcription.

It catalyses the reaction RNA(n) + a ribonucleoside 5'-triphosphate = RNA(n+1) + diphosphate. DNA-dependent RNA polymerase catalyzes the transcription of DNA into RNA using the four ribonucleoside triphosphates as substrates. This chain is DNA-directed RNA polymerase subunit beta, found in Trichlorobacter lovleyi (strain ATCC BAA-1151 / DSM 17278 / SZ) (Geobacter lovleyi).